The following is a 159-amino-acid chain: Ribosomal RNA large subunit methyltransferase H (159 aa).

Residues L76, G108, and F127–L132 each bind S-adenosyl-L-methionine.

It belongs to the RNA methyltransferase RlmH family. In terms of assembly, homodimer.

Its subcellular location is the cytoplasm. The enzyme catalyses pseudouridine(1915) in 23S rRNA + S-adenosyl-L-methionine = N(3)-methylpseudouridine(1915) in 23S rRNA + S-adenosyl-L-homocysteine + H(+). Specifically methylates the pseudouridine at position 1915 (m3Psi1915) in 23S rRNA. The protein is Ribosomal RNA large subunit methyltransferase H of Streptococcus uberis (strain ATCC BAA-854 / 0140J).